We begin with the raw amino-acid sequence, 1337 residues long: Protein HEG homolog 1 (1337 aa).

The first 31 residues, 1–31 (MATPRAPRWPPPSLLLLLLLPLLLLPPAAPG), serve as a signal peptide directing secretion. Composition is skewed to low complexity over residues 28-40 (AAPGARGSLPSPA) and 54-66 (PGAGHTAPGPGVA). Disordered stretches follow at residues 28–149 (AAPG…SNMA), 175–211 (SSLLSLESLPESPSSSRSQRRITPSQTESGTSLGFLE), 235–296 (ASHP…QNPS), 313–675 (VPRT…PSPI), 723–767 (LIPS…TVSL), and 860–909 (EGNR…PQTT). At 32 to 1204 (ARGSLPSPAH…GLNCGNPYQL (1173 aa)) the chain is on the extracellular side. Over residues 118–131 (TAQNARMSHSSSEG) the composition is skewed to polar residues. Residues 175–190 (SSLLSLESLPESPSSS) show a composition bias toward low complexity. Polar residues-rich tracts occupy residues 195–206 (RITPSQTESGTS), 247–258 (VLSQKRNSSGQE), 283–296 (IKNGNNFTALQNPS), and 340–361 (GITSMSVRSSPSVKDSRTNSGL). Over residues 470-480 (RGGGEDSGMGG) the composition is skewed to gly residues. 2 stretches are compositionally biased toward low complexity: residues 486 to 502 (SSSSSSSTSSSESLDSS) and 556 to 575 (SYSEASESSTSSVKISDSPS). Composition is skewed to polar residues over residues 576 to 585 (QAQPKQSSMS) and 592 to 617 (AQSSTESPVLHTSNLPTYTSTVNMPN). Low complexity predominate over residues 637–675 (PSTQPSPSQPQPFSSALPSTRSPGSTSETTTSSPSPSPI). 2 stretches are compositionally biased toward polar residues: residues 725–742 (PSNQTANPKNQSTPQQEK) and 751–763 (SLVSPPTDSTKAV). A compositionally biased stretch (low complexity) spans 868-884 (PTTQPIPLTTSTTSAGE). Over residues 885-896 (RTTELGRAEESS) the composition is skewed to basic and acidic residues. A compositionally biased stretch (polar residues) spans 897-909 (PSHFLTPSSPQTT). One can recognise an EGF-like 1 domain in the interval 941–979 (PVNSCTVNPCLHDGKCIVDLTGRGYRCVCPPAWQGENCS). 6 disulfides stabilise this stretch: Cys945/Cys956, Cys950/Cys967, Cys969/Cys978, Cys985/Cys996, Cys990/Cys1005, and Cys1007/Cys1018. One can recognise an EGF-like 2; calcium-binding domain in the interval 981–1019 (DVNECLSSPCPPLATCNNTQGSFTCRCPVGYQLEKGICN). Residue Asn1093 is glycosylated (N-linked (GlcNAc...) asparagine). A helical membrane pass occupies residues 1205–1225 (ITVVIAAAGGGLLLILGVALI). At 1226-1337 (VTCCRKSKND…SDESRRRDYF (112 aa)) the chain is on the cytoplasmic side. Ser1315 carries the phosphoserine modification.

As to quaternary structure, interacts with CCM2 and KRIT1; KRIT1 markedly facilitates interaction with CCM2.

The protein localises to the cell membrane. It is found in the cell junction. Its function is as follows. Receptor component of the CCM signaling pathway which is a crucial regulator of heart and vessel formation and integrity. May be acting by stabilizing endothelial cell junctions. This Mus musculus (Mouse) protein is Protein HEG homolog 1 (Heg1).